Consider the following 367-residue polypeptide: Biotin--protein ligase 1, chloroplastic (367 aa).

The transit peptide at 1-37 (MEAVRSTTTLSNFHLLNILVLRSLKPLHRLSFSFSAS) directs the protein to the chloroplast. In terms of domain architecture, BPL/LPL catalytic spans 105–289 (IITHRFGRFL…KFEKFFDLFM (185 aa)). Biotin contacts are provided by residues 122–124 (STH), Gln145, 149–151 (RGR), and Lys220.

Belongs to the biotin--protein ligase family. As to expression, expressed in roots, leaves, stems, flowers, siliques and seeds.

It is found in the plastid. It localises to the chloroplast. The protein resides in the cytoplasm. The protein localises to the cytosol. It carries out the reaction apo-[3-methylcrotonoyl-CoA:carbon-dioxide ligase (ADP-forming)] + biotin + ATP = holo-[3-methylcrotonoyl-CoA:carbon-dioxide ligase (ADP-forming)] + AMP + diphosphate + H(+). The enzyme catalyses biotin + L-lysyl-[protein] + ATP = N(6)-biotinyl-L-lysyl-[protein] + AMP + diphosphate + H(+). Its function is as follows. Plays a major role in biotin-dependent carboxylase biotinylation. Catalyzes the addition of biotin to the biotin carboxyl carrier protein (BCCP) subunit of acetyl-CoA carboxylase. Can also biotinylate methylcrotonyl-CoA carboxylase. Is responsible for most, if not all, biotin--protein ligase activity in Arabidopsis. Is essential for plant viability and required for ovule development. The protein is Biotin--protein ligase 1, chloroplastic of Arabidopsis thaliana (Mouse-ear cress).